Reading from the N-terminus, the 208-residue chain is MQARGTVKVQGDAKVDGKMSTGQHSHHQHLNSTQANATTTALEYRAMNRPLYRGPISHNIISEMAEGFYVLSGGYKKLFIPSKDVYALMQNVGMHLTEEEFHDALRVIGQSEPQNADELSFSDFLLLMTREVDDTMADELRSAFFHYDKYKTGYVTRKQFTELFATLGERSTPEELEELLAVAEVDETDDKIDYNRFVNELTSRVNCM.

Residues 1 to 34 (MQARGTVKVQGDAKVDGKMSTGQHSHHQHLNSTQ) are disordered. EF-hand domains are found at residues 64 to 98 (MAEG…HLTE), 99 to 134 (EEFH…EVDD), 135 to 170 (TMAD…LGER), and 171 to 206 (STPE…SRVN). Residues glutamate 118, aspartate 123, aspartate 148, threonine 152, and tyrosine 154 each contribute to the Ca(2+) site.

In Trypanosoma cruzi, this protein is EF-hand protein 5 variant 1.